Here is a 1104-residue protein sequence, read N- to C-terminus: Lon protease homolog, mitochondrial (1104 aa).

The transit peptide at 1-54 (MLRGQTLRWRAALQTPRSLILRPLFAPGGYNVGPRSVLETSRRFRSLPPSLRTF) directs the protein to the mitochondrion. Disordered stretches follow at residues 41-192 (SRRF…KPSV) and 296-317 (SLIP…TEKR). Composition is skewed to basic and acidic residues over residues 64–104 (KPPP…DSSG) and 125–144 (KAAD…EAEA). Residues 158–169 (SDSSSESKPSGS) are compositionally biased toward low complexity. 2 stretches are compositionally biased toward basic and acidic residues: residues 172–187 (GGDD…DKAL) and 308–317 (NSEDKTTEKR). Residues 199-451 (VMAIPIAKRP…KGLVVLKKEL (253 aa)) form the Lon N-terminal domain. 604–611 (GPPGVGKT) is an ATP binding site. Basic and acidic residues predominate over residues 825–839 (AEGKAAQEESEKETG). The interval 825–857 (AEGKAAQEESEKETGPIESTSEQEKATTENPRV) is disordered. Residues 891–1077 (TFPPGVTMGL…SEVFDILFAD (187 aa)) enclose the Lon proteolytic domain. Active-site residues include S983 and K1026.

The protein belongs to the peptidase S16 family. As to quaternary structure, homohexamer or homoheptamer. Organized in a ring with a central cavity.

It is found in the mitochondrion matrix. The enzyme catalyses Hydrolysis of proteins in presence of ATP.. ATP-dependent serine protease that mediates the selective degradation of misfolded, unassembled or oxidatively damaged polypeptides as well as certain short-lived regulatory proteins in the mitochondrial matrix. May also have a chaperone function in the assembly of inner membrane protein complexes. Participates in the regulation of mitochondrial gene expression and in the maintenance of the integrity of the mitochondrial genome. Binds to mitochondrial DNA in a site-specific manner. This chain is Lon protease homolog, mitochondrial (pim1), found in Emericella nidulans (strain FGSC A4 / ATCC 38163 / CBS 112.46 / NRRL 194 / M139) (Aspergillus nidulans).